The primary structure comprises 1505 residues: Probable serine/threonine-protein kinase irlD (1505 aa).

The segment covering 1-18 (MGPKKGKRSHSKNHHHHN) has biased composition (basic residues). Disordered stretches follow at residues 1-30 (MGPK…NSGG), 121-211 (IPQP…NNIL), 548-571 (TTTT…DKEN), and 862-1013 (EENE…TIAT). Residues 139 to 158 (SISTTTTTTTATAIEIESSS) are compositionally biased toward low complexity. A compositionally biased stretch (polar residues) spans 159–172 (GLTSNITDSTEIQL). Low complexity-rich tracts occupy residues 173–209 (DSTT…NSNN) and 548–561 (TTTT…TTTT). Basic and acidic residues-rich tracts occupy residues 562–571 (IDKDEKDKEN) and 862–882 (EENE…EKKK). Residues 846–892 (IRTEESLKAEKDLLEQEENEKKRLKEKRKKEEKEKKKQQNLKQKSLI) are a coiled coil. Residues 896–924 (TTTTTTTTPIPITVPIPTQTQTPTQTPTQ) are compositionally biased toward low complexity. Over residues 925-943 (TPIPTPIPTTPIPTTPIPI) the composition is skewed to pro residues. Low complexity-rich tracts occupy residues 944-954 (PIQLTPTTPKT) and 960-977 (TPKT…KTPK). The segment covering 978–989 (NSTLDKQTISTP) has biased composition (polar residues). Positions 1054–1324 (RKDEFIIGRG…TENILLHPFF (271 aa)) constitute a Protein kinase domain. Residues 1060-1068 (IGRGSNGTL) and Lys-1083 each bind ATP. Asp-1194 functions as the Proton acceptor in the catalytic mechanism. The KEN domain occupies 1327 to 1505 (HEKKVKFIDA…LIYFNDLIIK (179 aa)).

The protein belongs to the protein kinase superfamily. Ser/Thr protein kinase family.

It catalyses the reaction L-seryl-[protein] + ATP = O-phospho-L-seryl-[protein] + ADP + H(+). The catalysed reaction is L-threonyl-[protein] + ATP = O-phospho-L-threonyl-[protein] + ADP + H(+). In Dictyostelium discoideum (Social amoeba), this protein is Probable serine/threonine-protein kinase irlD (irlD).